A 729-amino-acid chain; its full sequence is MAPAPTPAAAAGRRVAVLAAALVAASLAASVGVANAAVSYDRRSLVINGRRRILLSGSIHYPRSTPEMWPGLIQKAKDGGLDVIQTYVFWNGHEPVQGQYYFSDRYDLVRFVKLVKQAGLYVHLRIGPYVCAEWNFGGFPVWLKYVPGVSFRTDNGPFKAEMQKFVEKIVSMMKSEGLFEWQGGPIIMSQVENEFGPMESVGGSGAKPYANWAAKMAVGTNTGVPWVMCKQDDAPDPVINTCNGFYCDYFSPNKNYKPSMWTEAWTGWFTSFGGGVPHRPVEDLAFAVARFIQKGGSFVNYYMYHGGTNFGRTAGGPFIATSYDYDAPIDEFGLLRQPKWGHLRDLHRAIKQAEPVLVSADPTIESIGSYEKAYVFKAKNGACAAFLSNYHMNTAVKVRFNGQQYNLPAWSISILPDCKTAVFNTATVKEPTLMPKMNPVVRFAWQSYSEDTNSLSDSAFTKDGLVEQLSMTWDKSDYLWYTTYVNIGTNDLRSGQSPQLTVYSAGHSMQVFVNGKSYGSVYGGYDNPKLTYNGRVKMWQGSNKISILSSAVGLPNVGNHFENWNVGVLGPVTLSSLNGGTKDLSHQKWTYQVGLKGETLGLHTVTGSSAVEWGGPGGYQPLTWHKAFFNAPAGNDPVALDMGSMGKGQLWVNGHHVGRYWSYKASGGCGGCSYAGTYHEDKCRSNCGDLSQRWYHVPRSWLKPGGNLLVVLEEYGGDLAGVSLATRTT.

The signal sequence occupies residues 1–35; the sequence is MAPAPTPAAAAGRRVAVLAAALVAASLAASVGVAN. Glu-194 serves as the catalytic Proton donor. Glu-263 serves as the catalytic Nucleophile.

It belongs to the glycosyl hydrolase 35 family.

The protein localises to the secreted. It localises to the extracellular space. It is found in the apoplast. It carries out the reaction Hydrolysis of terminal non-reducing beta-D-galactose residues in beta-D-galactosides.. The polypeptide is Beta-galactosidase 4 (Oryza sativa subsp. japonica (Rice)).